The following is a 167-amino-acid chain: Thioredoxin-like protein HI_1115 (167 aa).

The chain crosses the membrane as a helical span at residues 10 to 27; the sequence is GLSLFLTFIVITSILDFV. A Thioredoxin domain is found at 30–167; the sequence is PVVPEEINKI…VRLFFAEFFG (138 aa). Cys-69 and Cys-72 are oxidised to a cystine.

It belongs to the thioredoxin family.

The protein resides in the cell membrane. The chain is Thioredoxin-like protein HI_1115 from Haemophilus influenzae (strain ATCC 51907 / DSM 11121 / KW20 / Rd).